Consider the following 281-residue polypeptide: 2-dehydro-3-deoxyphosphooctonate aldolase (281 aa).

It belongs to the KdsA family.

Its subcellular location is the cytoplasm. The enzyme catalyses D-arabinose 5-phosphate + phosphoenolpyruvate + H2O = 3-deoxy-alpha-D-manno-2-octulosonate-8-phosphate + phosphate. It functions in the pathway carbohydrate biosynthesis; 3-deoxy-D-manno-octulosonate biosynthesis; 3-deoxy-D-manno-octulosonate from D-ribulose 5-phosphate: step 2/3. Its pathway is bacterial outer membrane biogenesis; lipopolysaccharide biosynthesis. The protein is 2-dehydro-3-deoxyphosphooctonate aldolase of Pseudomonas aeruginosa (strain UCBPP-PA14).